Here is a 108-residue protein sequence, read N- to C-terminus: MEYVYAALLLHSVGKEINEENLKAVLQAAGVEPEEARIKALVAALEGVNIDEVIEKAAMPVAVAAAPAAAPAEAGGEEKKEEEKKEEEEKEEEVSEEEALAGLSALFG.

Residues 67–108 (PAAAPAEAGGEEKKEEEKKEEEEKEEEVSEEEALAGLSALFG) form a disordered region. The span at 84-99 (KKEEEEKEEEVSEEEA) shows a compositional bias: acidic residues.

It belongs to the eukaryotic ribosomal protein P1/P2 family. Part of the 50S ribosomal subunit. Homodimer, it forms part of the ribosomal stalk which helps the ribosome interact with GTP-bound translation factors. Forms a heptameric uL10/P0(P1)2(P1)2(P1)2 complex, where uL10/P0 forms an elongated spine to which the P1 dimers bind in a sequential fashion.

Forms part of the ribosomal stalk, playing a central role in the interaction of the ribosome with GTP-bound translation factors. The stalk complex of P.horikoshii binds to E.coli large subunits and confers on them the ability to interact with eukaryotic elongation factors. Each succesive P1 dimer bound along the P0 spine increases the GTPase activity of elongation factors and increases translation by reconsituted ribosomes. The chain is Large ribosomal subunit protein P1 from Pyrococcus horikoshii (strain ATCC 700860 / DSM 12428 / JCM 9974 / NBRC 100139 / OT-3).